Here is a 431-residue protein sequence, read N- to C-terminus: Signal recognition particle 54 kDa protein (431 aa).

GTP-binding positions include 105-112 (GVEGSGKT), 185-189 (DTAGR), and 243-246 (TKMD).

Belongs to the GTP-binding SRP family. SRP54 subfamily. Part of the signal recognition particle protein translocation system, which is composed of SRP and FtsY. Archaeal SRP consists of a 7S RNA molecule of 300 nucleotides and two protein subunits: SRP54 and SRP19.

Its subcellular location is the cytoplasm. The enzyme catalyses GTP + H2O = GDP + phosphate + H(+). Its function is as follows. Involved in targeting and insertion of nascent membrane proteins into the cytoplasmic membrane. Binds to the hydrophobic signal sequence of the ribosome-nascent chain (RNC) as it emerges from the ribosomes. The SRP-RNC complex is then targeted to the cytoplasmic membrane where it interacts with the SRP receptor FtsY. The polypeptide is Signal recognition particle 54 kDa protein (Pyrobaculum calidifontis (strain DSM 21063 / JCM 11548 / VA1)).